Reading from the N-terminus, the 177-residue chain is Transcription antitermination protein NusB (177 aa).

Residues 1-35 (MTDSANPTPSARPPRQPRTGTTGTGARKAGSKSGR) are disordered. A compositionally biased stretch (low complexity) spans 17–28 (PRTGTTGTGARK).

This sequence belongs to the NusB family.

Functionally, involved in transcription antitermination. Required for transcription of ribosomal RNA (rRNA) genes. Binds specifically to the boxA antiterminator sequence of the ribosomal RNA (rrn) operons. This is Transcription antitermination protein NusB from Acidovorax ebreus (strain TPSY) (Diaphorobacter sp. (strain TPSY)).